An 813-amino-acid polypeptide reads, in one-letter code: Leucine--tRNA ligase (813 aa).

Residues 41-51 carry the 'HIGH' region motif; it reads PYPSGTLHMGH. A 'KMSKS' region motif is present at residues 575 to 579; the sequence is KMSKS. ATP is bound at residue Lys578.

The protein belongs to the class-I aminoacyl-tRNA synthetase family.

It localises to the cytoplasm. It carries out the reaction tRNA(Leu) + L-leucine + ATP = L-leucyl-tRNA(Leu) + AMP + diphosphate. In Francisella tularensis subsp. holarctica (strain FTNF002-00 / FTA), this protein is Leucine--tRNA ligase.